Here is a 372-residue protein sequence, read N- to C-terminus: NAD(P)H-quinone oxidoreductase subunit 1 (372 aa).

Transmembrane regions (helical) follow at residues 27–47 (VLWM…GVLV), 97–117 (FLFT…YLIV), 128–148 (VGAG…GLLM), 176–196 (LALA…IDIV), 204–224 (ILGW…IAAL), 254–274 (FALF…LVSI), 308–328 (ALGI…AILL), and 347–367 (FLLP…LTFP).

Belongs to the complex I subunit 1 family. NDH-1 is composed of at least 11 different subunits.

Its subcellular location is the cellular thylakoid membrane. It carries out the reaction a plastoquinone + NADH + (n+1) H(+)(in) = a plastoquinol + NAD(+) + n H(+)(out). It catalyses the reaction a plastoquinone + NADPH + (n+1) H(+)(in) = a plastoquinol + NADP(+) + n H(+)(out). In terms of biological role, NDH-1 shuttles electrons from an unknown electron donor, via FMN and iron-sulfur (Fe-S) centers, to quinones in the respiratory and/or the photosynthetic chain. The immediate electron acceptor for the enzyme in this species is believed to be plastoquinone. Couples the redox reaction to proton translocation, and thus conserves the redox energy in a proton gradient. In Synechococcus elongatus (strain ATCC 33912 / PCC 7942 / FACHB-805) (Anacystis nidulans R2), this protein is NAD(P)H-quinone oxidoreductase subunit 1.